The chain runs to 541 residues: MEGTDQKKAAVGTREGLPCIAPLLTTVEETPQVVSAQVRGHFPKWLSGSLLRIGPGKFEFGKDKYNHWFDGMALLHQFKMEKGMVTYRSKFLQSDTYKTNSVHDRIVISEFGTLALPDPCKNVFERFMSKFELPAITDNTSVNYVRYKGDYYVSTETNFMNKVDIETLEKTEKVDWSKFIAVNGATAHPHYDPDGTAYNMGNSYGLHGSCYNVIRVPPEKVDLGETLHGAQVICSIASTERMKPSYYHSFGMTRNYIIFIEQPLKMNLWKMITSRIRGMAFSDGISWEPQYNTRFHVVDKNTGQLLPGMYYSKPFVTFHQINAFEDQGCVVLDLCCQDDGRSLEAYRLQNLRKAGAGLDQVYNSVGRSFPRRFVLPLHVSLNDPEGENLSPLSYSSASAVKQANGKIWCSYENLHPEDLEEEGGVEFPQINYGQFSGKKYRFFYGCGFRHLVGDSLIKLDVVNKTLMIWREDGFYPSEPVFVPAPGASEEDGGVILSVVITPDQNENNFLLVLDAKNFEELGRAEVPVRMPYGFHGTFVTV.

Fe cation-binding residues include histidine 188, histidine 248, histidine 319, and histidine 535.

It belongs to the carotenoid oxygenase family. Fe(2+) serves as cofactor. Widely expressed. Detected in heart, spleen, lung, intestine, colon, stomach, kidney, bladder, and prostate. Highly expressed in liver and testis (at protein level).

Its subcellular location is the mitochondrion. The enzyme catalyses all-trans-beta-carotene + O2 = beta-ionone + all-trans-10'-apo-beta-carotenal. It carries out the reaction 5-cis-lycopene + O2 = 5-cis-10'-apo-lycopenal + (3E,5E)-6,10-dimethylundeca-3,5,9-trien-2-one. The catalysed reaction is 13-cis-lycopene + O2 = 13-cis-10'-apo-lycopenal + (3E,5E)-6,10-dimethylundeca-3,5,9-trien-2-one. It catalyses the reaction lutein + O2 = (3R,6R)-hydroxy-alpha-ionone + (3R)-3-hydroxy-10'-apo-beta-carotenal. The enzyme catalyses lutein + O2 = (3R,6R)-3-hydroxy-10'-apo-alpha-carotenal + (3R)-hydroxy-beta-ionone. It carries out the reaction all-trans-zeaxanthin + 2 O2 = 4,9-dimethyldodeca-2,4,6,8,10-pentaenedial + 2 (3R)-hydroxy-beta-ionone. The catalysed reaction is all-trans-zeaxanthin + O2 = (3R)-3-hydroxy-10'-apo-beta-carotenal + (3R)-hydroxy-beta-ionone. It catalyses the reaction beta-cryptoxanthin + O2 = all-trans-10'-apo-beta-carotenal + (3R)-hydroxy-beta-ionone. The enzyme catalyses all-trans-10'-apo-beta-carotenal + O2 = beta-ionone + 4,9-dimethyldodeca-2,4,6,8,10-pentaenedial. It carries out the reaction (3R)-3-hydroxy-10'-apo-beta-carotenal + O2 = 4,9-dimethyldodeca-2,4,6,8,10-pentaenedial + (3R)-hydroxy-beta-ionone. The catalysed reaction is (3R,6R)-3-hydroxy-10'-apo-alpha-carotenal + O2 = (3R,6R)-hydroxy-alpha-ionone + 4,9-dimethyldodeca-2,4,6,8,10-pentaenedial. Broad specificity mitochondrial dioxygenase that mediates the asymmetric oxidative cleavage of carotenoids. Cleaves carotenes (pure hydrocarbon carotenoids) such as all-trans-beta-carotene and lycopene as well as xanthophylls (oxygenated carotenoids) such as zeaxanthin, lutein and beta-cryptoxanthin at both the 9,10 and the 9',10' carbon-carbon double bond. Through its function in carotenoids metabolism regulates oxidative stress and the production of important signaling molecules. The sequence is that of Carotenoid-cleaving dioxygenase, mitochondrial from Mustela putorius furo (European domestic ferret).